We begin with the raw amino-acid sequence, 428 residues long: Adenylosuccinate synthetase (428 aa).

Residues 11–17 (GDEGKGK) and 39–41 (GHT) contribute to the GTP site. Asp-12 functions as the Proton acceptor in the catalytic mechanism. Mg(2+) is bound by residues Asp-12 and Gly-39. IMP is bound by residues 12–15 (DEGK), 37–40 (NAGH), Thr-130, Arg-144, Asn-226, Thr-241, and Arg-305. Catalysis depends on His-40, which acts as the Proton donor. Residue 301–307 (VTTGRKR) coordinates substrate. GTP is bound by residues Arg-307, 333-335 (KLD), and 415-417 (GTG).

This sequence belongs to the adenylosuccinate synthetase family. As to quaternary structure, homodimer. Mg(2+) is required as a cofactor.

Its subcellular location is the cytoplasm. The enzyme catalyses IMP + L-aspartate + GTP = N(6)-(1,2-dicarboxyethyl)-AMP + GDP + phosphate + 2 H(+). Its pathway is purine metabolism; AMP biosynthesis via de novo pathway; AMP from IMP: step 1/2. Functionally, plays an important role in the de novo pathway and in the salvage pathway of purine nucleotide biosynthesis. Catalyzes the first committed step in the biosynthesis of AMP from IMP. This is Adenylosuccinate synthetase from Candida tropicalis (strain ATCC MYA-3404 / T1) (Yeast).